The primary structure comprises 1053 residues: Integrin alpha-3 (1053 aa).

The first 32 residues, 1 to 32 (MGPGPCRVPRAPGWLLRALALMVAACGRVAFA), serve as a signal peptide directing secretion. Over 33–993 (FNLDTRFLVV…LVEELPAEIE (961 aa)) the chain is Extracellular. FG-GAP repeat units lie at residues 38-103 (RFLV…KDDC), 110-171 (EKSD…DLQL), 185-235 (CNSN…WDLS), 236-293 (EYSY…GGDL), 294-355 (QRKQ…ASFP), 357-412 (QPSL…GLLR), and 416-478 (QIIH…VARP). N-linked (GlcNAc...) asparagine glycosylation occurs at Asn-86. Cystine bridges form between Cys-94–Cys-103, Cys-140–Cys-162, and Cys-185–Cys-197. Intrachain disulfides connect Cys-486/Cys-491 and Cys-497/Cys-551. N-linked (GlcNAc...) asparagine glycans are attached at residues Asn-501, Asn-512, Asn-574, and Asn-606. A disulfide bond links Cys-616 and Cys-622. 4 N-linked (GlcNAc...) asparagine glycosylation sites follow: Asn-657, Asn-699, Asn-843, and Asn-859. A disulfide bridge connects residues Cys-695 and Cys-704. 2 disulfide bridges follow: Cys-848-Cys-906 and Cys-913-Cys-918. Positions 865–890 (PGVTPLSPQRRRRQLDPGGDQSSPPV) are disordered. Residues Asn-925, Asn-928, Asn-937, and Asn-971 are each glycosylated (N-linked (GlcNAc...) asparagine). Residues 994–1021 (LWLVLVAVGAGLLLLGLIILLLWKCGFF) traverse the membrane as a helical segment. Residue Cys-1018 is the site of S-palmitoyl cysteine attachment. Over 1022–1053 (KRARTRALYEAKRQKAEMKSQPSETERLTDDY) the chain is Cytoplasmic.

The protein belongs to the integrin alpha chain family. Heterodimer of an alpha and a beta subunit. The alpha subunit is composed of a heavy and a light chain linked by a disulfide bond. Alpha-3 associates with beta-1. Interacts with HPS5. Interacts with FAP (seprase); the interaction occurs at the cell surface of invadopodia membrane in a collagen-dependent manner. In terms of tissue distribution, isoform 1 and isoform 2 are expressed in heart and brain. Only isoform 1 is detected in lung.

Its subcellular location is the cell membrane. The protein localises to the cell projection. The protein resides in the invadopodium membrane. It is found in the filopodium membrane. Its function is as follows. Integrin alpha-3/beta-1 is a receptor for fibronectin, laminin, collagen, epiligrin, thrombospondin and CSPG4. Integrin alpha-3/beta-1 provides a docking site for FAP (seprase) at invadopodia plasma membranes in a collagen-dependent manner and hence may participate in the adhesion, formation of invadopodia and matrix degradation processes, promoting cell invasion. Alpha-3/beta-1 may mediate with LGALS3 the stimulation by CSPG4 of endothelial cells migration. This Mus musculus (Mouse) protein is Integrin alpha-3 (Itga3).